A 433-amino-acid polypeptide reads, in one-letter code: Ornithine decarboxylase, chloroplastic (433 aa).

Lysine 96 is modified (N6-(pyridoxal phosphate)lysine). Pyridoxal 5'-phosphate is bound by residues serine 228, glycine 266, and 299–302; that span reads EPGR. 342–343 contributes to the substrate binding site; it reads YD. Catalysis depends on cysteine 378, which acts as the Proton donor; shared with dimeric partner. Residue aspartate 379 participates in substrate binding. Tyrosine 407 contacts pyridoxal 5'-phosphate.

It belongs to the Orn/Lys/Arg decarboxylase class-II family. As to quaternary structure, homodimer. Only the dimer is catalytically active, as the active sites are constructed of residues from both monomers. Pyridoxal 5'-phosphate is required as a cofactor.

It localises to the plastid. The protein localises to the chloroplast. The enzyme catalyses L-ornithine + H(+) = putrescine + CO2. It participates in alkaloid biosynthesis; nicotine biosynthesis. Its pathway is amine and polyamine biosynthesis; putrescine biosynthesis via L-ornithine pathway; putrescine from L-ornithine: step 1/1. Involved in the biosynthesis of pyridine alkaloid natural products, leading mainly to the production of anabasine, anatabine, nicotine and nornicotine, effective deterrents against herbivores with antiparasitic and pesticide properties (neurotoxins); nornicotine serves as the precursor in the synthesis of the carcinogen compound N'-nitrosonornicotine (NNN). Catalyzes the first and rate-limiting step of polyamine biosynthesis that converts ornithine into putrescine, which is the precursor for the polyamines, spermidine and spermine. Polyamines are essential for cell proliferation and are implicated in cellular processes, ranging from DNA replication to apoptosis. This is Ornithine decarboxylase, chloroplastic from Nicotiana glauca (Glaucous tobacco).